A 231-amino-acid polypeptide reads, in one-letter code: DNA mismatch repair protein MutH (231 aa).

Belongs to the MutH family.

It is found in the cytoplasm. In terms of biological role, sequence-specific endonuclease that cleaves unmethylated GATC sequences. It is involved in DNA mismatch repair. The sequence is that of DNA mismatch repair protein MutH from Klebsiella pneumoniae (strain 342).